Consider the following 468-residue polypeptide: Uronate isomerase (468 aa).

The protein belongs to the metallo-dependent hydrolases superfamily. Uronate isomerase family.

The enzyme catalyses D-glucuronate = D-fructuronate. It catalyses the reaction aldehydo-D-galacturonate = keto-D-tagaturonate. It participates in carbohydrate metabolism; pentose and glucuronate interconversion. The chain is Uronate isomerase from Brachyspira hyodysenteriae (strain ATCC 49526 / WA1).